The primary structure comprises 155 residues: Cytochrome c-type biogenesis protein CcmE (155 aa).

Over 1–8 the chain is Cytoplasmic; it reads MNPLRKKR. Residues 9-29 traverse the membrane as a helical; Signal-anchor for type II membrane protein segment; the sequence is LLIIAALLAGVGLAMTLALGA. At 30 to 155 the chain is on the periplasmic side; it reads LKENINLFYT…GGSSTPAKQG (126 aa). 2 residues coordinate heme: His-124 and Tyr-128. Residues 134-155 are disordered; it reads TKALRDSGQAAPGGSSTPAKQG.

This sequence belongs to the CcmE/CycJ family.

The protein localises to the cell inner membrane. In terms of biological role, heme chaperone required for the biogenesis of c-type cytochromes. Transiently binds heme delivered by CcmC and transfers the heme to apo-cytochromes in a process facilitated by CcmF and CcmH. This chain is Cytochrome c-type biogenesis protein CcmE, found in Pseudomonas savastanoi pv. phaseolicola (strain 1448A / Race 6) (Pseudomonas syringae pv. phaseolicola (strain 1448A / Race 6)).